Consider the following 189-residue polypeptide: TATA-box-binding protein 1 (189 aa).

2 consecutive repeat copies span residues 10-86 (IENV…FDKL) and 101-179 (VQNI…ISRL).

This sequence belongs to the TBP family.

In terms of biological role, general factor that plays a role in the activation of archaeal genes transcribed by RNA polymerase. Binds specifically to the TATA box promoter element which lies close to the position of transcription initiation. This chain is TATA-box-binding protein 1 (tbp1), found in Haloferax volcanii (strain ATCC 29605 / DSM 3757 / JCM 8879 / NBRC 14742 / NCIMB 2012 / VKM B-1768 / DS2) (Halobacterium volcanii).